The chain runs to 546 residues: Chaperonin GroEL 4 (546 aa).

Residues Thr30 to Pro33, Lys51, Asp87 to Thr91, Gly415, and Asp496 each bind ATP.

Belongs to the chaperonin (HSP60) family. As to quaternary structure, forms a cylinder of 14 subunits composed of two heptameric rings stacked back-to-back. Interacts with the co-chaperonin GroES.

The protein resides in the cytoplasm. The enzyme catalyses ATP + H2O + a folded polypeptide = ADP + phosphate + an unfolded polypeptide.. In terms of biological role, together with its co-chaperonin GroES, plays an essential role in assisting protein folding. The GroEL-GroES system forms a nano-cage that allows encapsulation of the non-native substrate proteins and provides a physical environment optimized to promote and accelerate protein folding. The polypeptide is Chaperonin GroEL 4 (Bradyrhizobium sp. (strain BTAi1 / ATCC BAA-1182)).